Reading from the N-terminus, the 273-residue chain is Putative phosphoenolpyruvate synthase regulatory protein (273 aa).

Residue 154-161 (GVSRSGKT) participates in ADP binding.

The protein belongs to the pyruvate, phosphate/water dikinase regulatory protein family. PSRP subfamily.

It catalyses the reaction [pyruvate, water dikinase] + ADP = [pyruvate, water dikinase]-phosphate + AMP + H(+). It carries out the reaction [pyruvate, water dikinase]-phosphate + phosphate + H(+) = [pyruvate, water dikinase] + diphosphate. Its function is as follows. Bifunctional serine/threonine kinase and phosphorylase involved in the regulation of the phosphoenolpyruvate synthase (PEPS) by catalyzing its phosphorylation/dephosphorylation. This chain is Putative phosphoenolpyruvate synthase regulatory protein, found in Neisseria gonorrhoeae (strain ATCC 700825 / FA 1090).